Consider the following 591-residue polypeptide: Aspartate--tRNA ligase (591 aa).

Glu-172 serves as a coordination point for L-aspartate. The segment at 196–199 (QLFK) is aspartate. Arg-218 is a binding site for L-aspartate. ATP contacts are provided by residues 218–220 (RDE) and Gln-227. L-aspartate is bound at residue His-449. Position 483 (Glu-483) interacts with ATP. Residue Arg-490 coordinates L-aspartate. 535-538 (GLDR) lines the ATP pocket.

Belongs to the class-II aminoacyl-tRNA synthetase family. Type 1 subfamily. In terms of assembly, homodimer.

Its subcellular location is the cytoplasm. The catalysed reaction is tRNA(Asp) + L-aspartate + ATP = L-aspartyl-tRNA(Asp) + AMP + diphosphate. In terms of biological role, catalyzes the attachment of L-aspartate to tRNA(Asp) in a two-step reaction: L-aspartate is first activated by ATP to form Asp-AMP and then transferred to the acceptor end of tRNA(Asp). The sequence is that of Aspartate--tRNA ligase from Actinobacillus pleuropneumoniae serotype 5b (strain L20).